The chain runs to 334 residues: Sterol 4-C-methyltransferase strm-1 (334 aa).

The protein belongs to the class I-like SAM-binding methyltransferase superfamily. Erg6/SMT family. Expressed in the pharynx and hypodermal syncytium.

The catalysed reaction is 5alpha-cholest-7-en-3-one + S-adenosyl-L-methionine = 4alpha-methyl-5alpha-cholest-7-en-3-one + S-adenosyl-L-homocysteine + H(+). The protein operates within steroid hormone biosynthesis; dafachronic acid biosynthesis. In terms of biological role, catalyzes the methyl transfer from S-adenosyl-methionine to the C-4 of the A-ring sterols such as lathosterone (5alpha-cholest-7-en-3-one) thereby rendering them unsuitable as ligand precursors. May irreversibly shunt sterols away from hormone dafachronic acid production. Dafachronic acids act as ligands and bind directly to the nuclear hormone receptor (NHR) daf-12 suppressing dauer formation and inducing reproductive growth. By reducing the biosynthesis of dafachronic acids, this methyltransferase can regulate dauer larva formation. This is Sterol 4-C-methyltransferase strm-1 (strm-1) from Caenorhabditis elegans.